A 393-amino-acid chain; its full sequence is Chorismate synthase (393 aa).

2 residues coordinate NADP(+): R40 and R46. Residues 129-131 (RSS), 249-250 (QA), G301, 316-320 (KPIPT), and R342 each bind FMN.

This sequence belongs to the chorismate synthase family. In terms of assembly, homotetramer. Requires FMNH2 as cofactor.

It carries out the reaction 5-O-(1-carboxyvinyl)-3-phosphoshikimate = chorismate + phosphate. It functions in the pathway metabolic intermediate biosynthesis; chorismate biosynthesis; chorismate from D-erythrose 4-phosphate and phosphoenolpyruvate: step 7/7. Catalyzes the anti-1,4-elimination of the C-3 phosphate and the C-6 proR hydrogen from 5-enolpyruvylshikimate-3-phosphate (EPSP) to yield chorismate, which is the branch point compound that serves as the starting substrate for the three terminal pathways of aromatic amino acid biosynthesis. This reaction introduces a second double bond into the aromatic ring system. The protein is Chorismate synthase of Geotalea uraniireducens (strain Rf4) (Geobacter uraniireducens).